A 146-amino-acid polypeptide reads, in one-letter code: Snaclec mamushigin subunit beta (146 aa).

The N-terminal stretch at 1–23 (MGRFIFLSFGLLVVFVSLSGTGA) is a signal peptide. 3 cysteine pairs are disulfide-bonded: cysteine 25–cysteine 36, cysteine 53–cysteine 142, and cysteine 119–cysteine 134. A C-type lectin domain is found at 32–143 (YEGHCYRVFQ…CSRTYNVVCK (112 aa)).

As to quaternary structure, heterodimer of subunits alpha and beta; disulfide-linked. As to expression, expressed by the venom gland.

It localises to the secreted. Binds to platelet GPIbalpha (GP1BA) and enhances platelet aggregation at low-shear stress. At high-shear stress, blocks platelet aggregation in a dose-dependent manner. The chain is Snaclec mamushigin subunit beta from Gloydius blomhoffii (Mamushi).